Reading from the N-terminus, the 127-residue chain is Holo-[acyl-carrier-protein] synthase (127 aa).

Mg(2+) is bound by residues D9 and E58.

The protein belongs to the P-Pant transferase superfamily. AcpS family. Mg(2+) is required as a cofactor.

The protein localises to the cytoplasm. It catalyses the reaction apo-[ACP] + CoA = holo-[ACP] + adenosine 3',5'-bisphosphate + H(+). In terms of biological role, transfers the 4'-phosphopantetheine moiety from coenzyme A to a Ser of acyl-carrier-protein. This is Holo-[acyl-carrier-protein] synthase from Shewanella sp. (strain ANA-3).